The sequence spans 351 residues: Tryptophan--tRNA ligase (351 aa).

ATP contacts are provided by residues 11–13 and 19–20; these read RPT and GH. The short motif at 12–20 is the 'HIGH' region element; the sequence is PTGALHLGH. Residue aspartate 139 coordinates L-tryptophan. ATP is bound by residues 151-153, leucine 190, and 198-202; these read GRD and KMSKS. A 'KMSKS' region motif is present at residues 198-202; sequence KMSKS.

It belongs to the class-I aminoacyl-tRNA synthetase family. In terms of assembly, homodimer.

Its subcellular location is the cytoplasm. The enzyme catalyses tRNA(Trp) + L-tryptophan + ATP = L-tryptophyl-tRNA(Trp) + AMP + diphosphate + H(+). Catalyzes the attachment of tryptophan to tRNA(Trp). This Borreliella burgdorferi (strain ATCC 35210 / DSM 4680 / CIP 102532 / B31) (Borrelia burgdorferi) protein is Tryptophan--tRNA ligase.